The chain runs to 415 residues: Fructose-1,6-bisphosphatase, chloroplastic (415 aa).

The N-terminal 57 residues, 1–57, are a transit peptide targeting the chloroplast; the sequence is MASIGPATTTAVKLRSSIFNPQSSTLSPSQQCITFTKSLHSFPTATRHNVASGVRCM. Residues glutamate 135, glutamate 164, aspartate 185, leucine 187, and aspartate 188 each coordinate Mg(2+). 188 to 191 provides a ligand contact to substrate; it reads DGSS. The tract at residues 207–232 is involved in light regulation; the sequence is SPNDECIVDSDHDDESQLSAEEQRCV. A disulfide bond links cysteine 231 and cysteine 236. Residues asparagine 295, tyrosine 327, tyrosine 345, tyrosine 347, and lysine 357 each coordinate substrate. Glutamate 363 serves as a coordination point for Mg(2+).

This sequence belongs to the FBPase class 1 family. Homotetramer. Mg(2+) serves as cofactor.

It is found in the plastid. It localises to the chloroplast. It carries out the reaction beta-D-fructose 1,6-bisphosphate + H2O = beta-D-fructose 6-phosphate + phosphate. It participates in carbohydrate biosynthesis; Calvin cycle. The protein is Fructose-1,6-bisphosphatase, chloroplastic of Spinacia oleracea (Spinach).